The sequence spans 807 residues: Ecotropic viral integration site 5 ortholog (807 aa).

The disordered stretch occupies residues 1-31 (MTLTTTTTASSAESQAKMDVKGGALPGEENL). Phosphothreonine is present on threonine 33. A phosphoserine mark is found at serine 58 and serine 64. The 185-residue stretch at 116-300 (GIPHHFRAIV…RIMDVFLSEG (185 aa)) folds into the Rab-GAP TBC domain. Coiled-coil stretches lie at residues 352–463 (SIKL…ENNV), 494–583 (CLLE…ENQR), and 627–772 (REME…RGKF).

As to quaternary structure, interacts with Rab11.

It is found in the cytoplasm. The protein resides in the endosome. Functions as a GTPase-activating protein (GAP). During border cell migration in the ovary, acts as a GAP for Rab11 and is necessary for the maintenance of active receptor tyrosine kinases at the leading edge. This is Ecotropic viral integration site 5 ortholog (Evi5) from Drosophila melanogaster (Fruit fly).